The sequence spans 374 residues: Nucleosome assembly protein 1;3 (374 aa).

Residues 26-80 (VNALKNKLQNLAGQHSDVLENLTPKIRRRVEVLREIQGKHDEIETKFREERAALE) adopt a coiled-coil conformation. Ser41 bears the Phosphoserine mark. The short motif at 47 to 62 (LTPKIRRRVEVLREIQ) is the Nuclear export signal element. The Nuclear localization signal signature appears at 222-227 (KKKPKK). The span at 299-339 (IEGEEFEIDNDDEDDIDEDEDEDEEDEDEDEEEDDEDEEEE) shows a compositional bias: acidic residues. The disordered stretch occupies residues 299–374 (IEGEEFEIDN…GERPPECKQQ (76 aa)). A compositionally biased stretch (basic residues) spans 343–355 (TKKKPSVLHKKGG). Positions 364-374 (QGERPPECKQQ) are enriched in basic and acidic residues. The residue at position 371 (Cys371) is a Cysteine methyl ester. Residue Cys371 is the site of S-farnesyl cysteine attachment. A propeptide spans 372–374 (KQQ) (removed in mature form).

This sequence belongs to the nucleosome assembly protein (NAP) family. In terms of assembly, can form homomeric and heteromeric protein complexes with NAP1;1, NAP1;2 and NAP1;4. Binds histone H2A and associates with chromatin in vivo. Ubiquitous.

Its subcellular location is the nucleus. The protein resides in the cytoplasm. Functionally, may modulate chromatin structure by regulation of nucleosome assembly/disassembly. May function in nucleotide excision repair (NER). Involved in somatic homologous recombination. Could be involved in response to abscisic acid (ABA) and to salt stress. The polypeptide is Nucleosome assembly protein 1;3 (NAP1;3) (Arabidopsis thaliana (Mouse-ear cress)).